The sequence spans 266 residues: Anamorsin homolog (266 aa).

Residues 1–164 (MIINFVGNTL…NITAENPDFL (164 aa)) are N-terminal SAM-like domain. Positions 165 to 185 (SNEDNDVSSDDEDLYNNEDDK) are linker. Cys229, Cys232, Cys240, and Cys243 together coordinate [4Fe-4S] cluster. 2 short sequence motifs (cx2C motif) span residues 229–232 (CGNC) and 240–243 (CASC). The segment at 229-243 (CGNCYLGDAFRCASC) is fe-S binding site B.

It belongs to the anamorsin family. Monomer. The cofactor is [4Fe-4S] cluster.

It is found in the cytoplasm. The protein localises to the mitochondrion intermembrane space. Functionally, component of the cytosolic iron-sulfur (Fe-S) protein assembly (CIA) machinery. Required for the maturation of extramitochondrial Fe-S proteins. Part of an electron transfer chain functioning in an early step of cytosolic Fe-S biogenesis, facilitating the de novo assembly of a [4Fe-4S] cluster on the cytosolic Fe-S scaffold complex. Electrons are transferred from NADPH via a FAD- and FMN-containing diflavin oxidoreductase. Together with the diflavin oxidoreductase, also required for the assembly of the diferric tyrosyl radical cofactor of ribonucleotide reductase (RNR), probably by providing electrons for reduction during radical cofactor maturation in the catalytic small subunit. This chain is Anamorsin homolog, found in Plasmodium falciparum (isolate 3D7).